We begin with the raw amino-acid sequence, 449 residues long: MVDASQYLSVTALTQYLKRKFDADPYLAKVYLTGEISNYRKRVGNQYFSLKDDHAKIGALMFRNAFSKVQFDLEEGMKVLVVGRVSLYEPSGEYRLIVEHLEPDGVGALYQAFEQLKKKLAAEGLFDRNQRPLPLFPKRVAVVTSPSGAVIQDIMTTVARRYPILQLTLFPAVVQGDQAADSLVKRLNQIKTIGGFDAVIIGRGGGSIEDLWPFNEEKVARALVDMPMPVVSSVGHETDTTITDFIADRRAATPTAAAEIVTPVTLIDALNRISEDRVRLVNAMHNRLKNAAIRVQRSAQSVVLTQPDRLYDQYVQRVDQFQQRLQQSMHNRLRDADHRLAMATSQLDGRQLFIRLVNLQRQVTGDRHRLDQAMRGLVKTKRQAFASAVSGLDHLSPLKILGRGFAYVTDKQGQMLKSLSDYELDQDIHIHVADGQVGAHVTTKEKTHG.

This sequence belongs to the XseA family. Heterooligomer composed of large and small subunits.

The protein localises to the cytoplasm. The catalysed reaction is Exonucleolytic cleavage in either 5'- to 3'- or 3'- to 5'-direction to yield nucleoside 5'-phosphates.. Bidirectionally degrades single-stranded DNA into large acid-insoluble oligonucleotides, which are then degraded further into small acid-soluble oligonucleotides. This is Exodeoxyribonuclease 7 large subunit from Lacticaseibacillus paracasei (strain ATCC 334 / BCRC 17002 / CCUG 31169 / CIP 107868 / KCTC 3260 / NRRL B-441) (Lactobacillus paracasei).